A 226-amino-acid polypeptide reads, in one-letter code: Transcriptional activator plp-1 (226 aa).

The protein belongs to the PUR DNA-binding protein family.

Its subcellular location is the nucleus. It is found in the chromosome. Its function is as follows. Probable transcription activator. Binds telomeric DNA containing repeats of the sequence, 5'-TTAGGC-3'. Binds to end-1 promoter, activating end-1 expression, which is required for endoderm specification during embryonic development. The protein is Transcriptional activator plp-1 of Caenorhabditis elegans.